The primary structure comprises 691 residues: 1,4-alpha-glucan-branching enzyme (691 aa).

Positions 80 and 116 each coordinate (1,4-alpha-D-glucosyl)n. Catalysis depends on aspartate 333, which acts as the Nucleophile. The Proton donor role is filled by glutamate 398.

It belongs to the glycosyl hydrolase 13 family. GlgB subfamily.

The protein localises to the cytoplasm. It catalyses the reaction Transfers a segment of a (1-&gt;4)-alpha-D-glucan chain to a primary hydroxy group in a similar glucan chain.. It participates in glycan biosynthesis; glycogen biosynthesis. Functionally, glycogen-branching enzyme participates in the glycogen biosynthetic process along with glycogenin and glycogen synthase. Generates alpha-1,6-glucosidic branches from alpha-1,4-linked glucose chains, to increase solubility of the glycogen polymer. The chain is 1,4-alpha-glucan-branching enzyme (GLC3) from Yarrowia lipolytica (strain CLIB 122 / E 150) (Yeast).